We begin with the raw amino-acid sequence, 209 residues long: Imidazole glycerol phosphate synthase subunit HisH (209 aa).

One can recognise a Glutamine amidotransferase type-1 domain in the interval 1-205; sequence MIAIIDYGMG…KGVVESWKSS (205 aa). The Nucleophile role is filled by Cys-79. Catalysis depends on residues His-180 and Glu-182.

Heterodimer of HisH and HisF.

The protein resides in the cytoplasm. The enzyme catalyses 5-[(5-phospho-1-deoxy-D-ribulos-1-ylimino)methylamino]-1-(5-phospho-beta-D-ribosyl)imidazole-4-carboxamide + L-glutamine = D-erythro-1-(imidazol-4-yl)glycerol 3-phosphate + 5-amino-1-(5-phospho-beta-D-ribosyl)imidazole-4-carboxamide + L-glutamate + H(+). It catalyses the reaction L-glutamine + H2O = L-glutamate + NH4(+). The protein operates within amino-acid biosynthesis; L-histidine biosynthesis; L-histidine from 5-phospho-alpha-D-ribose 1-diphosphate: step 5/9. Functionally, IGPS catalyzes the conversion of PRFAR and glutamine to IGP, AICAR and glutamate. The HisH subunit catalyzes the hydrolysis of glutamine to glutamate and ammonia as part of the synthesis of IGP and AICAR. The resulting ammonia molecule is channeled to the active site of HisF. This is Imidazole glycerol phosphate synthase subunit HisH from Bacillus cereus (strain ATCC 10987 / NRS 248).